A 360-amino-acid polypeptide reads, in one-letter code: Peptide chain release factor 1 (360 aa).

Glutamine 236 is subject to N5-methylglutamine.

This sequence belongs to the prokaryotic/mitochondrial release factor family. In terms of processing, methylated by PrmC. Methylation increases the termination efficiency of RF1.

It localises to the cytoplasm. Functionally, peptide chain release factor 1 directs the termination of translation in response to the peptide chain termination codons UAG and UAA. This is Peptide chain release factor 1 from Methylococcus capsulatus (strain ATCC 33009 / NCIMB 11132 / Bath).